The chain runs to 168 residues: Endoribonuclease YbeY (168 aa).

The Zn(2+) site is built by His125, His129, and His135.

Belongs to the endoribonuclease YbeY family. Zn(2+) serves as cofactor.

Its subcellular location is the cytoplasm. Functionally, single strand-specific metallo-endoribonuclease involved in late-stage 70S ribosome quality control and in maturation of the 3' terminus of the 16S rRNA. This chain is Endoribonuclease YbeY, found in Rhodopseudomonas palustris (strain BisB18).